A 424-amino-acid chain; its full sequence is Choline-phosphate cytidylyltransferase (424 aa).

The segment at 1-70 (MANPTTGKSS…RKRRRLTKEF (70 aa)) is disordered. Low complexity predominate over residues 14–24 (KLSNSSLSNLF). The residue at position 16 (Ser16) is a Phosphoserine. Acidic residues predominate over residues 35–44 (ETEEQDNEDK). The span at 45-55 (DESKNQDENKD) shows a compositional bias: basic and acidic residues. The residue at position 59 (Thr59) is a Phosphothreonine. CTP is bound by residues 111 to 119 (VFDLFHLGH) and Lys149. Residues Lys149 and Trp178 each contribute to the substrate site. CTP-binding positions include 195 to 196 (HD), Tyr200, and 223 to 227 (RTNGV). The residue at position 346 (Ser346) is a Phosphoserine. The tract at residues 348 to 424 (ATEFANEFTG…LTQKKKQSAN (77 aa)) is disordered. Positions 381 to 398 (NSNNTNTNSDSDSNTNST) are enriched in low complexity. Ser401 is modified (phosphoserine; by CK2).

The protein belongs to the cytidylyltransferase family.

The protein localises to the membrane. The enzyme catalyses phosphocholine + CTP + H(+) = CDP-choline + diphosphate. The protein operates within phospholipid metabolism; phosphatidylcholine biosynthesis; phosphatidylcholine from phosphocholine: step 1/2. Catalyzes the key rate-limiting step in the CDP-choline pathway for phosphatidylcholine biosynthesis. The sequence is that of Choline-phosphate cytidylyltransferase (PCT1) from Saccharomyces cerevisiae (strain ATCC 204508 / S288c) (Baker's yeast).